A 322-amino-acid polypeptide reads, in one-letter code: Cytochrome c biogenesis protein CcsA (322 aa).

A run of 8 helical transmembrane segments spans residues 15–35, 45–65, 72–92, 98–120, 144–164, 226–246, 253–273, and 287–307; these read FSIVSIIITMRLISFFLVDGI, GMIVTFLCLTGLLVTRWTYSG, LYESLIFLSWSFSLIHIVPYF, YLSTITGSSVVFTQGFTTSGLLT, MILGYASLLCGSLLSIALLVI, GISLGFIFLTIGILSGAVWAN, WNWDPKETWAFITWIIFAIYL, and AIVASIGFLIIWICYFGVNLL.

Belongs to the CcmF/CycK/Ccl1/NrfE/CcsA family. May interact with Ccs1.

The protein localises to the plastid. The protein resides in the chloroplast thylakoid membrane. Required during biogenesis of c-type cytochromes (cytochrome c6 and cytochrome f) at the step of heme attachment. The polypeptide is Cytochrome c biogenesis protein CcsA (Coffea arabica (Arabian coffee)).